The following is a 74-amino-acid chain: Lambda-hexatoxin-Hv1d (74 aa).

The signal sequence occupies residues 1–22 (MNTATCFIVLLVVATVIGGIEA). Positions 23–35 (GESDMRKDVMGLF) are excised as a propeptide. 4 disulfides stabilise this stretch: Cys40-Cys54, Cys47-Cys59, Cys50-Cys51, and Cys53-Cys69.

It belongs to the neurotoxin 11 (kappa toxin) family. Expressed by the venom gland.

The protein resides in the secreted. Its function is as follows. This excitatory toxin inhibits insect calcium-activated potassium (KCa) channels (Slo-type). In Hadronyche versuta (Blue mountains funnel-web spider), this protein is Lambda-hexatoxin-Hv1d.